A 90-amino-acid chain; its full sequence is DNA-binding protein HU-beta (90 aa).

This sequence belongs to the bacterial histone-like protein family. In terms of assembly, heterodimer of an alpha and a beta chain.

In terms of biological role, histone-like DNA-binding protein which is capable of wrapping DNA to stabilize it, and thus to prevent its denaturation under extreme environmental conditions. The polypeptide is DNA-binding protein HU-beta (hupB) (Escherichia coli O6:H1 (strain CFT073 / ATCC 700928 / UPEC)).